Consider the following 730-residue polypeptide: Elongation factor 2 (730 aa).

Residues 18-238 (DQIRNFGVIA…YSEGKVDELV (221 aa)) form the tr-type G domain. GTP-binding positions include 27–34 (AHVDHGKT), 93–97 (DTPGH), and 147–150 (NKVD). Diphthamide is present on H595. Residues 711 to 730 (RKRKGLAPDPPTVSEFIDRE) form a disordered region.

This sequence belongs to the TRAFAC class translation factor GTPase superfamily. Classic translation factor GTPase family. EF-G/EF-2 subfamily.

The protein resides in the cytoplasm. Functionally, catalyzes the GTP-dependent ribosomal translocation step during translation elongation. During this step, the ribosome changes from the pre-translocational (PRE) to the post-translocational (POST) state as the newly formed A-site-bound peptidyl-tRNA and P-site-bound deacylated tRNA move to the P and E sites, respectively. Catalyzes the coordinated movement of the two tRNA molecules, the mRNA and conformational changes in the ribosome. This chain is Elongation factor 2, found in Cenarchaeum symbiosum (strain A).